The primary structure comprises 658 residues: Scarecrow-like protein 28 (658 aa).

Disordered stretches follow at residues 43 to 85, 96 to 115, and 209 to 265; these read PCSS…TSGC, LATT…NNNR, and PAAV…NNNR. Low complexity predominate over residues 214–228; that stretch reads EASGGSSTSASSESR. Residues 265–654 form the GRAS domain; that stretch reads RNDLQRDFEL…QPLYTISAWT (390 aa). Residues 272 to 336 form a leucine repeat I (LRI) region; it reads FELVNLLTGC…VARMWPHIFH (65 aa). The VHIID stretch occupies residues 355–420; the sequence is LRFLNQVTPI…NPPHHVRITG (66 aa). The VHIID motif lies at 386–390; the sequence is VHIID. Positions 430 to 462 are leucine repeat II (LRII); it reads ETGDRLHGFAEAMNLQFEFHPVVDRLEDVRLWM. Positions 471–563 are PFYRE; the sequence is VAVNCVMQMH…EMLFGREIRN (93 aa). Residues 566 to 654 are SAW; that stretch reads ACEGSHRQER…QPLYTISAWT (89 aa).

The protein belongs to the GRAS family. As to quaternary structure, interacts with SNRNP35 and CYP95. Expressed in roots and sepals.

It localises to the nucleus. Functionally, probable transcription factor involved in plant development. This chain is Scarecrow-like protein 28 (SCL28), found in Arabidopsis thaliana (Mouse-ear cress).